The primary structure comprises 188 residues: MKVIASSLRKGNVVEKDGRLYVILSAENIHPGKGTPVTQLDMRRITDGVKVSERYRTTEQVERAFVEDREHTFLYKDGEGSHFMNPESYEQVAVPDDVIGDQAAYLQEGMAVMLSLHNGVPLAIELPQRVTLEIVETEPVTKGQTASSSYKPAVLSNGVRTLVPPHITTGTRVVIMTADGSYVERAKD.

The protein belongs to the elongation factor P family.

The protein localises to the cytoplasm. Its pathway is protein biosynthesis; polypeptide chain elongation. Involved in peptide bond synthesis. Stimulates efficient translation and peptide-bond synthesis on native or reconstituted 70S ribosomes in vitro. Probably functions indirectly by altering the affinity of the ribosome for aminoacyl-tRNA, thus increasing their reactivity as acceptors for peptidyl transferase. This chain is Elongation factor P, found in Methylobacterium sp. (strain 4-46).